A 311-amino-acid chain; its full sequence is Syndecan-1 (311 aa).

Residues 1–22 form the signal peptide; sequence MRRAALWLWLCALALRLQPALP. The Extracellular segment spans residues 23-255; the sequence is QIVAVNVPPE…SLLDRKEVLG (233 aa). Disordered regions lie at residues 29–59 and 152–184; these read VPPE…LSRQ and SHPH…VEGG. The segment covering 32-42 has biased composition (acidic residues); sequence EDQDGSGDDSD. Serine 37 carries O-linked (Xyl...) (chondroitin sulfate) serine glycosylation. Asparagine 43 is a glycosylation site (N-linked (GlcNAc...) asparagine). O-linked (Xyl...) (heparan sulfate) serine glycans are attached at residues serine 45 and serine 47. 2 O-linked (Xyl...) (chondroitin sulfate) serine glycosylation sites follow: serine 207 and serine 217. A helical membrane pass occupies residues 256 to 276; the sequence is GVIAGGLVGLIFAVCLVAFML. At 277-311 the chain is on the cytoplasmic side; the sequence is YRMKKKDEGSYSLEEPKQANGGAYQKPTKQEEFYA. The interval 285-311 is disordered; the sequence is GSYSLEEPKQANGGAYQKPTKQEEFYA. A Phosphoserine modification is found at serine 286.

It belongs to the syndecan proteoglycan family. As to quaternary structure, interacts with CDCP1. Interacts (via C-terminus) with TIAM1 (via PDZ domain). Interacts with MDK. In terms of processing, shedding is enhanced by a number of factors such as heparanase, thrombin or EGF. Also by stress and wound healing. PMA-mediated shedding is inhibited by TIMP3.

It is found in the membrane. It localises to the secreted. The protein localises to the extracellular exosome. In terms of biological role, cell surface proteoglycan that contains both heparan sulfate and chondroitin sulfate and that links the cytoskeleton to the interstitial matrix. Regulates exosome biogenesis in concert with SDCBP and PDCD6IP. Able to induce its own expression in dental mesenchymal cells and also in the neighboring dental epithelial cells via an MSX1-mediated pathway. The polypeptide is Syndecan-1 (Mus musculus (Mouse)).